The sequence spans 410 residues: DNA replication and repair protein RecF (410 aa).

ATP is bound at residue 30-37 (GPNGHGKT).

This sequence belongs to the RecF family.

Its subcellular location is the cytoplasm. In terms of biological role, the RecF protein is involved in DNA metabolism; it is required for DNA replication and normal SOS inducibility. RecF binds preferentially to single-stranded, linear DNA. It also seems to bind ATP. The protein is DNA replication and repair protein RecF of Rhodococcus jostii (strain RHA1).